A 400-amino-acid polypeptide reads, in one-letter code: 1-deoxy-D-xylulose 5-phosphate reductoisomerase (400 aa).

Residues Thr10, Gly11, Ser12, Ile13, Gly36, Asn38, and Asn124 each coordinate NADPH. Lys125 is a binding site for 1-deoxy-D-xylulose 5-phosphate. Glu126 is a binding site for NADPH. Asp150 lines the Mn(2+) pocket. Residues Ser151, Glu152, Ser186, and His209 each coordinate 1-deoxy-D-xylulose 5-phosphate. Glu152 is a Mn(2+) binding site. Gly215 is an NADPH binding site. The 1-deoxy-D-xylulose 5-phosphate site is built by Ser222, Asn227, Lys228, and Glu231. Residue Glu231 coordinates Mn(2+).

Belongs to the DXR family. Requires Mg(2+) as cofactor. The cofactor is Mn(2+).

The catalysed reaction is 2-C-methyl-D-erythritol 4-phosphate + NADP(+) = 1-deoxy-D-xylulose 5-phosphate + NADPH + H(+). Its pathway is isoprenoid biosynthesis; isopentenyl diphosphate biosynthesis via DXP pathway; isopentenyl diphosphate from 1-deoxy-D-xylulose 5-phosphate: step 1/6. Its function is as follows. Catalyzes the NADPH-dependent rearrangement and reduction of 1-deoxy-D-xylulose-5-phosphate (DXP) to 2-C-methyl-D-erythritol 4-phosphate (MEP). The chain is 1-deoxy-D-xylulose 5-phosphate reductoisomerase from Aliivibrio salmonicida (strain LFI1238) (Vibrio salmonicida (strain LFI1238)).